The following is a 248-amino-acid chain: Putative transposase YncI (248 aa).

Belongs to the transposase 11 family.

The chain is Putative transposase YncI (yncI) from Escherichia coli (strain K12).